The following is a 161-amino-acid chain: 6,7-dimethyl-8-ribityllumazine synthase (161 aa).

5-amino-6-(D-ribitylamino)uracil is bound by residues Trp-26, 58–60 (SFE), and 81–83 (VVI). 86–87 (GT) is a binding site for (2S)-2-hydroxy-3-oxobutyl phosphate. The active-site Proton donor is the His-89. Phe-114 is a binding site for 5-amino-6-(D-ribitylamino)uracil. Arg-128 provides a ligand contact to (2S)-2-hydroxy-3-oxobutyl phosphate.

The protein belongs to the DMRL synthase family.

It carries out the reaction (2S)-2-hydroxy-3-oxobutyl phosphate + 5-amino-6-(D-ribitylamino)uracil = 6,7-dimethyl-8-(1-D-ribityl)lumazine + phosphate + 2 H2O + H(+). It functions in the pathway cofactor biosynthesis; riboflavin biosynthesis; riboflavin from 2-hydroxy-3-oxobutyl phosphate and 5-amino-6-(D-ribitylamino)uracil: step 1/2. Functionally, catalyzes the formation of 6,7-dimethyl-8-ribityllumazine by condensation of 5-amino-6-(D-ribitylamino)uracil with 3,4-dihydroxy-2-butanone 4-phosphate. This is the penultimate step in the biosynthesis of riboflavin. The chain is 6,7-dimethyl-8-ribityllumazine synthase from Streptomyces avermitilis (strain ATCC 31267 / DSM 46492 / JCM 5070 / NBRC 14893 / NCIMB 12804 / NRRL 8165 / MA-4680).